Consider the following 82-residue polypeptide: Immediate early response 3-interacting protein 1 (82 aa).

The next 2 helical transmembrane spans lie at 2–22 (AFTLYSLMQAALLCVNAIAVL) and 62–82 (VMRVPLIIVNSITIVLLLLFG).

Belongs to the YOS1 family.

The protein resides in the endoplasmic reticulum membrane. In terms of biological role, regulator of endoplasmic reticulum secretion that acts as a key determinant of brain size. Required for secretion of extracellular matrix proteins. Required for correct brain development by depositing sufficient extracellular matrix proteins for tissue integrity and the proliferation of neural progenitors. Acts as a regulator of the unfolded protein response (UPR). This is Immediate early response 3-interacting protein 1 from Rattus norvegicus (Rat).